Here is a 263-residue protein sequence, read N- to C-terminus: Ribonuclease HII (263 aa).

The RNase H type-2 domain occupies 71 to 262 (KAIAGIDEVG…VKSMCCDSTN (192 aa)). Residues Asp77, Glu78, and Asp172 each coordinate a divalent metal cation.

It belongs to the RNase HII family. Mn(2+) is required as a cofactor. It depends on Mg(2+) as a cofactor.

Its subcellular location is the cytoplasm. It catalyses the reaction Endonucleolytic cleavage to 5'-phosphomonoester.. Functionally, endonuclease that specifically degrades the RNA of RNA-DNA hybrids. The polypeptide is Ribonuclease HII (Streptococcus pyogenes serotype M1).